The primary structure comprises 228 residues: Cytochrome P450 monooxygenase ataY (228 aa).

Cys-216 serves as a coordination point for heme.

It belongs to the cytochrome P450 family. The cofactor is heme.

It participates in mycotoxin biosynthesis. In terms of biological role, cytochrome P450 monooxygenase; part of the gene cluster that mediates the biosynthesis of acetylaranotin, a member of the epipolythiodioxopiperazine (ETP) class of toxins characterized by a disulfide-bridged cyclic dipeptide. The first step of acetylaranotin biosynthesis is performed by the NRPS ataP which produces diketopiperazine cyclo-L-Phe-L-Phe via the condensation of 2 phenylalanines (L-Phe). The ataC domain of ataTC then catalyzes the formation of bishydroxylation of cyclo-L-Phe-L-Phe. The glutathione S-transferase domain ataG in ataIMG further catalyzes the conjugation of two glutathiones to the bishydroxylated intermediate. Next, the dipeptidase ataJ removes the Glu residues. The following step is performed by the carbon sulfur lyase domain ataI of ataIMG which may convert the bis-cysteinyl adduct to yield an epidithiol intermediate. The ataT domain from ataTC then catalyzes the oxidation of the free dithiols, followed by a cyclization step catalyzed by the cytochrome P450 ataF. AtaF probably acts as an epoxidase to promote a dual epoxidation formation at C8 and C9 along with C8' and C9', followed by the spontaneous nucleophilic attack of the amide nitrogens N10 and N10' to yield an intermediate with the pyrrolidine partial structure. The final steps of acetylaranotin biosynthesis involve the acetylation and ring rearrangement of an epitetrathiodiketopiperazine intermediate to produce acetylaranotin. AtaH probably catalyzes the acetylation of epitetrathiodiketopiperazine to produce a diacetate and ataY is responsible for the formation of the dihydrooxepin moiety that converts the diacetate intermediate to acetylaranotin via acetylapoaranotin. Both enzymes could function independently in the absence of the other. The acetylaranotin bis-thiomethyltransferase ataS located outside of acetylaranotin gene cluster is the main thiomethyltransferase responsible for converting acetylaranotin and its related intermediates to their methylated forms. The sequence is that of Cytochrome P450 monooxygenase ataY from Aspergillus terreus (strain NIH 2624 / FGSC A1156).